The sequence spans 378 residues: Mas-related G-protein coupled receptor MRG (378 aa).

The Extracellular segment spans residues 1 to 77; that stretch reads MVWGKICWFS…VGQQALPLNI (77 aa). Residues asparagine 54 and asparagine 57 are each glycosylated (N-linked (GlcNAc...) asparagine). A helical membrane pass occupies residues 78–101; that stretch reads IAPKAVLVSLCGVLLNGTVFWLLC. At 102–109 the chain is on the cytoplasmic side; sequence CGATNPYM. A helical transmembrane segment spans residues 110–136; sequence VYILHLVAADVIYLCCSAVGFLQVTLL. Over 137–154 the chain is Extracellular; that stretch reads TYHGVVFFIPDFLAILSP. Residues 155-169 form a helical membrane-spanning segment; it reads FSFEVCLCLLVAIST. Residues 170-191 are Cytoplasmic-facing; the sequence is ERCVCVLFPIWYRCHRPKYTSN. The helical transmembrane segment at 192–207 threads the bilayer; the sequence is VVCTLIWGLPFCINIV. At 208-221 the chain is on the extracellular side; the sequence is KSLFLTYWKHVKAC. Residues 222–248 form a helical membrane-spanning segment; it reads VIFLKLSGLFHAILSLVMCVSSLTLLI. Residues 249 to 264 lie on the Cytoplasmic side of the membrane; that stretch reads RFLCCSQQQKATRVYA. Residues 265-286 traverse the membrane as a helical segment; sequence VVQISAPMFLLWALPLSVAPLI. Residues 287–297 are Extracellular-facing; sequence TDFKMFVTTSY. A helical membrane pass occupies residues 298–317; sequence LISLFLIINSSANPIIYFFV. The Cytoplasmic segment spans residues 318 to 378; the sequence is GSLRKKRLKE…PREHRVDVET (61 aa). The disordered stretch occupies residues 344–378; the sequence is GRNKKAAGIDPMEQPHSTQHVENLLPREHRVDVET. Basic and acidic residues predominate over residues 368–378; that stretch reads LPREHRVDVET.

It belongs to the G-protein coupled receptor 1 family. Mas subfamily.

It localises to the cell membrane. This chain is Mas-related G-protein coupled receptor MRG (MAS1L), found in Homo sapiens (Human).